Reading from the N-terminus, the 257-residue chain is Gasdermin-like protein rcd-1-1 (257 aa).

This sequence belongs to the gasdermin family. As to quaternary structure, heterooligomer; the heterooligomer with rcd-1-2 forms a ring-shaped pore complex when inserted in the membrane.

It localises to the cytoplasm. The protein resides in the cell membrane. Gasdermin-like protein involved in heterokaryon incompatibility, a process that ensures that during spontaneous vegetative cell fusion, only compatible cells from the same colony survive (non-self-recognition). In N.crassa, the rcd-1 locus exists as 2 incompatible alleles, rcd-1-1 (this entry) and rcd-1-2 (AC P0DW10). During the allorecognition process, forms a heterooligomer with rcd-1-2, thereby forming a functional gasdermin-like complex that binds to membranes and forms pores, triggering cell death. Binds negatively charged phospholipids, such as cardiolipin and phosphatidylserine. Also binds to phosphoinositides, preferentially to phosphatidylinositol-3-phosphate (PtdIns-3-P), PtdIns-5-P and PtdIns-3,5-P2. The polypeptide is Gasdermin-like protein rcd-1-1 (Neurospora crassa (strain ATCC 24698 / 74-OR23-1A / CBS 708.71 / DSM 1257 / FGSC 987)).